The following is a 337-amino-acid chain: MLIKLPRSSECKASEITPEGIYLSRRTLLGGSLAGLALGALPGGVGAAQMSRYADVQAGAAPAWFTDKLAATRWQAVTVKDEAITPFKDATHYNNFYEFGPDKGDPAANGDSLKTEPWSIVVDGEVRKPGRYALEDFVKPYQLEERIYRLRCVEAWSMVIPWLGFPLAQVLKQVEPTSSARYVRFETLKDPQHMPGQRSGFALIDWPYREGLRLDEAMHPLAILAVGMYGRELPNQNGAPLRLVVPWKYGFKSIKSIVRISLVAEQPGTTWEGLAPDEYGFYANVNPTVDHPRWSQARERRLPSGLFSPNVRETQMFNGYADEVASLYTGLDLRKNY.

The tat-type signal signal peptide spans 1 to 54; that stretch reads MLIKLPRSSECKASEITPEGIYLSRRTLLGGSLAGLALGALPGGVGAAQMSRYA. Mo-molybdopterin contacts are provided by residues asparagine 94, 97–98, cysteine 152, threonine 187, asparagine 237, arginine 242, and 253–255; these read YE and SIK.

This sequence belongs to the MsrP family. Heterodimer of a catalytic subunit (MsrP) and a heme-binding subunit (MsrQ). Mo-molybdopterin serves as cofactor. Post-translationally, predicted to be exported by the Tat system. The position of the signal peptide cleavage has not been experimentally proven.

It is found in the periplasm. It carries out the reaction L-methionyl-[protein] + a quinone + H2O = L-methionyl-(S)-S-oxide-[protein] + a quinol. The catalysed reaction is L-methionyl-[protein] + a quinone + H2O = L-methionyl-(R)-S-oxide-[protein] + a quinol. Part of the MsrPQ system that repairs oxidized periplasmic proteins containing methionine sulfoxide residues (Met-O), using respiratory chain electrons. Thus protects these proteins from oxidative-stress damage caused by reactive species of oxygen and chlorine generated by the host defense mechanisms. MsrPQ is essential for the maintenance of envelope integrity under bleach stress, rescuing a wide series of structurally unrelated periplasmic proteins from methionine oxidation. The catalytic subunit MsrP is non-stereospecific, being able to reduce both (R-) and (S-) diastereoisomers of methionine sulfoxide. The protein is Protein-methionine-sulfoxide reductase catalytic subunit MsrP of Pseudomonas putida (strain ATCC 47054 / DSM 6125 / CFBP 8728 / NCIMB 11950 / KT2440).